Reading from the N-terminus, the 1228-residue chain is Myosin-1 (1228 aa).

Residues 1 to 27 (MAVTKRAGRRAQGGTQPAKGAQGVKKA) are disordered. One can recognise a Myosin motor domain in the interval 37–716 (VGVSDLTLLS…TLFALEHMRD (680 aa)). ATP is bound at residue 130-137 (GESGAGKT). Phosphoserine is present on Ser-358. Residues 405–487 (TIGILDIYGF…PGIFAALNDA (83 aa)) form an actin-binding region. IQ domains are found at residues 720–740 (HNMA…KTEC) and 741–768 (AIKI…SGHK). The TH1 domain occupies 776–962 (RRTYSLIGYR…SGSVQVPPGA (187 aa)). Disordered regions lie at residues 953 to 1040 (SGSV…AESA), 1053 to 1109 (QSLV…PAAP), and 1169 to 1228 (QGGA…DDDW). The span at 1053–1063 (QSLVNPRSGQG) shows a compositional bias: polar residues. Over residues 1064–1092 (QQQQQHHQAYQQPTAAQPAATSYSPAPAK) the composition is skewed to low complexity. Positions 1093 to 1106 (AAPPPPPPAPPAAP) are enriched in pro residues. Positions 1109–1170 (PAEPTYKALY…PAAYLEEVQG (62 aa)) constitute an SH3 domain. Low complexity predominate over residues 1180 to 1194 (PTAGGASAGASLAEA).

The protein belongs to the TRAFAC class myosin-kinesin ATPase superfamily. Myosin family. In terms of processing, phosphorylation of the TEDS site (Ser-358) is required for the polarization of the actin cytoskeleton. Phosphorylation probably activates the myosin-I ATPase activity.

The protein resides in the cytoplasm. It localises to the cytoskeleton. Its subcellular location is the actin patch. Functionally, type-I myosin implicated in the organization of the actin cytoskeleton. Required for proper actin cytoskeleton polarization. At the cell cortex, assembles in patch-like structures together with proteins from the actin-polymerizing machinery and promotes actin assembly. Functions as actin nucleation-promoting factor (NPF) for the Arp2/3 complex. In Yarrowia lipolytica (strain CLIB 122 / E 150) (Yeast), this protein is Myosin-1 (MYO1).